Reading from the N-terminus, the 466-residue chain is MTMLLDGGPQFPGLGVGSFGAPRHHEMPNREPAGMGLNPFGDSTHAAAAAAAAAAFKLSPATAHDLSSGQSSAFTPQGSGYANALGHHHHHHHHHHASQVPTYGGAASAAFNSTRDFLFRQRGSGLSEAASGGGQHGLFAGSASSLHAPAGIPEPPSYLLFPGLHEQGAGHPSPTGHVDNNQVHLGLRGELFGRADPYRPVASPRTDPYAASAQFPNYSPMNMNMGVNVAAHHGPGAFFRYMRQPIKQELSCKWIEEAQLSRPKKSCDRTFSTMHELVTHVTMEHVGGPEQNNHVCYWEECPREGKSFKAKYKLVNHIRVHTGEKPFPCPFPGCGKIFARSENLKIHKRTHTGEKPFKCEFEGCDRRFANSSDRKKHMHVHTSDKPYICKVCDKSYTHPSSLRKHMKVHESQGSDSSPAASSGYESSTPPAIASANSKDTTKTPSAVQTSTSHNPGLPPNFNEWYV.

A compositionally biased stretch (polar residues) spans 65–80; it reads DLSSGQSSAFTPQGSG. Residues 65-103 form a disordered region; the sequence is DLSSGQSSAFTPQGSGYANALGHHHHHHHHHHASQVPTY. The segment covering 86-97 has biased composition (basic residues); the sequence is GHHHHHHHHHHA. Residue Lys247 forms a Glycyl lysine isopeptide (Lys-Gly) (interchain with G-Cter in SUMO2) linkage. The segment at 250–285 adopts a C2H2-type 1; atypical zinc-finger fold; sequence LSCKWIEEAQLSRPKKSCDRTFSTMHELVTHVTMEH. Residues 294–321 form a C2H2-type 2; atypical zinc finger; that stretch reads HVCYWEECPREGKSFKAKYKLVNHIRVH. Short sequence motifs (nuclear localization signal) lie at residues 296–321 and 329–351; these read CYWE…IRVH and CPFP…KRTH. 3 consecutive C2H2-type zinc fingers follow at residues 327–351, 357–381, and 387–409; these read FPCP…KRTH, FKCE…MHVH, and YICK…MKVH. Residues 403-466 form a disordered region; that stretch reads RKHMKVHESQ…LPPNFNEWYV (64 aa). A compositionally biased stretch (low complexity) spans 411–427; sequence SQGSDSSPAASSGYESS. The segment covering 434–454 has biased composition (polar residues); that stretch reads SANSKDTTKTPSAVQTSTSHN.

This sequence belongs to the GLI C2H2-type zinc-finger protein family. In terms of assembly, interacts with KPNA1 and KPNA6. Interacts (via C2H2-type domains 3, 4 and 5) with GLI3; the interaction enhances its transcriptional activity. Interacts (via the C2H2-type domains 3, 4 and 5) with MDFIC (via the C2H2-type domains 3, 4 and 5); the interaction reduces its transcriptional activity. In terms of tissue distribution, CNS. A high level expression is seen in the cerebellum.

It is found in the nucleus. It localises to the cytoplasm. Functionally, acts as a transcriptional activator. Required in the earliest stages in both axial midline development and left-right (LR) asymmetry specification. Binds to the minimal GLI-consensus sequence 5'-GGGTGGTC-3'. This is Zinc finger protein ZIC 3 (Zic3) from Mus musculus (Mouse).